We begin with the raw amino-acid sequence, 478 residues long: RNA pseudouridine synthase 3, mitochondrial (478 aa).

Residues 1–20 (MWKAKTCFRQIYLTVLIRRY) constitute a mitochondrion transit peptide. In terms of domain architecture, S4 RNA-binding spans 92-162 (EEIYDKAIQT…MRISKRYDTI (71 aa)). Residue D232 is part of the active site.

The protein belongs to the pseudouridine synthase RluA family.

The protein resides in the mitochondrion. The catalysed reaction is a uridine in RNA = a pseudouridine in RNA. The protein is RNA pseudouridine synthase 3, mitochondrial of Arabidopsis thaliana (Mouse-ear cress).